Consider the following 572-residue polypeptide: EF-hand calcium-binding domain-containing protein 12 (572 aa).

Disordered regions lie at residues 62–85 and 146–169; these read VPRK…KPIP and EQSA…PRLS. In terms of domain architecture, EF-hand spans 196-231; it reads SRKIKILEIFHKVGQGENQRITREEFIAAVKAVGVP. Glu212 serves as a coordination point for Ca(2+).

This is EF-hand calcium-binding domain-containing protein 12 (EFCAB12) from Homo sapiens (Human).